A 159-amino-acid polypeptide reads, in one-letter code: Phosphopantetheine adenylyltransferase (159 aa).

Residue serine 9 participates in substrate binding. Residues 9-10 (SF) and histidine 17 each bind ATP. Residues lysine 41, leucine 73, and lysine 87 each coordinate substrate. ATP-binding positions include 88–90 (GLR), glutamate 98, and 123–129 (YSYLSSS).

This sequence belongs to the bacterial CoaD family. In terms of assembly, homohexamer. Requires Mg(2+) as cofactor.

Its subcellular location is the cytoplasm. The enzyme catalyses (R)-4'-phosphopantetheine + ATP + H(+) = 3'-dephospho-CoA + diphosphate. Its pathway is cofactor biosynthesis; coenzyme A biosynthesis; CoA from (R)-pantothenate: step 4/5. Its function is as follows. Reversibly transfers an adenylyl group from ATP to 4'-phosphopantetheine, yielding dephospho-CoA (dPCoA) and pyrophosphate. In Clostridium botulinum (strain Eklund 17B / Type B), this protein is Phosphopantetheine adenylyltransferase.